Consider the following 446-residue polypeptide: Transcription factor SOX-8 (446 aa).

Disordered stretches follow at residues 1–58 (MLDM…DPAE), 155–259 (AERL…RQNI), and 318–378 (HKSA…PFAG). Over residues 40 to 53 (EGLGRAGVAVGGAR) the composition is skewed to gly residues. The interval 58-100 (EAADERFPACIRDAVSQVLKGYDWSLVPMPVRGGGGGALKAKP) is dimerization (DIM). The HMG box DNA-binding region spans 102–170 (VKRPMNAFMV…QHKKDHPDYK (69 aa)). Basic and acidic residues-rich tracts occupy residues 155-171 (AERLRVQHKKDHPDYKY), 210-219 (DGHHHGDHTG), and 242-253 (PELKLEGRRPVD). The interval 224–298 (PPTPPTTPKT…LPLGGPAPPE (75 aa)) is transactivation domain (TAM). Residues 335-446 (RPHIKTEQPS…QPVYTTLTRP (112 aa)) form a transactivation domain (TAC) region. Low complexity predominate over residues 362-378 (SGQSSATPAAPAGPFAG). The 9aaTAD signature appears at 400–408 (PGLYQYPCF). The tract at residues 425 to 446 (LPPAHSPTSHWDQPVYTTLTRP) is disordered. The span at 430–446 (SPTSHWDQPVYTTLTRP) shows a compositional bias: polar residues.

The protein localises to the nucleus. In terms of biological role, transcription factor that may play a role in central nervous system, limb and facial development. May be involved in male sex determination. Binds the consensus motif 5'-[AT][AT]CAA[AT]G-3'. This Homo sapiens (Human) protein is Transcription factor SOX-8.